Consider the following 105-residue polypeptide: Malonate decarboxylase acyl carrier protein (105 aa).

Serine 28 carries the post-translational modification O-(phosphoribosyl dephospho-coenzyme A)serine.

This sequence belongs to the MdcC family. In terms of processing, covalently binds the prosthetic group of malonate decarboxylase.

The protein resides in the cytoplasm. Its function is as follows. Subunit of malonate decarboxylase, it is an acyl carrier protein to which acetyl and malonyl thioester residues are bound via a 2'-(5''-phosphoribosyl)-3'-dephospho-CoA prosthetic group and turn over during the catalytic mechanism. This is Malonate decarboxylase acyl carrier protein from Xanthomonas axonopodis pv. citri (strain 306).